Reading from the N-terminus, the 109-residue chain is UPF0122 protein Cbei_1174 (109 aa).

This sequence belongs to the UPF0122 family.

Might take part in the signal recognition particle (SRP) pathway. This is inferred from the conservation of its genetic proximity to ftsY/ffh. May be a regulatory protein. This is UPF0122 protein Cbei_1174 from Clostridium beijerinckii (strain ATCC 51743 / NCIMB 8052) (Clostridium acetobutylicum).